The following is a 212-amino-acid chain: Pyridoxine/pyridoxamine 5'-phosphate oxidase (212 aa).

Substrate is bound by residues 7–10 and lysine 65; that span reads REEY. Residues 60–65, 75–76, lysine 82, and glutamine 104 each bind FMN; these read RTVLLK and FT. Substrate-binding residues include tyrosine 122, arginine 126, and serine 130. Residues 139 to 140 and tryptophan 184 each bind FMN; that span reads QS. 190–192 contributes to the substrate binding site; the sequence is RLH. Arginine 194 is an FMN binding site.

Belongs to the pyridoxamine 5'-phosphate oxidase family. In terms of assembly, homodimer. FMN serves as cofactor.

It carries out the reaction pyridoxamine 5'-phosphate + O2 + H2O = pyridoxal 5'-phosphate + H2O2 + NH4(+). The catalysed reaction is pyridoxine 5'-phosphate + O2 = pyridoxal 5'-phosphate + H2O2. Its pathway is cofactor metabolism; pyridoxal 5'-phosphate salvage; pyridoxal 5'-phosphate from pyridoxamine 5'-phosphate: step 1/1. The protein operates within cofactor metabolism; pyridoxal 5'-phosphate salvage; pyridoxal 5'-phosphate from pyridoxine 5'-phosphate: step 1/1. Its function is as follows. Catalyzes the oxidation of either pyridoxine 5'-phosphate (PNP) or pyridoxamine 5'-phosphate (PMP) into pyridoxal 5'-phosphate (PLP). This chain is Pyridoxine/pyridoxamine 5'-phosphate oxidase, found in Rippkaea orientalis (strain PCC 8801 / RF-1) (Cyanothece sp. (strain PCC 8801)).